The chain runs to 384 residues: GDP-mannose transporter (384 aa).

At 1 to 40 (MVEDKKTDDYTIEMDKMDQGSKNFEAAAPPPQPRTPPAGS) the chain is on the cytoplasmic side. Residues 41–61 (ISNNPILPVLAYCGSSILMTV) traverse the membrane as a helical segment. At 62–69 (MNKYVLSG) the chain is on the lumenal side. The chain crosses the membrane as a helical span at residues 70–90 (LDFNLNFFLLCVQSIVCIVAI). The Cytoplasmic segment spans residues 91 to 110 (QTCKSCGLITYRDFSADEAR). A helical transmembrane segment spans residues 111 to 127 (KWFPITLLLIGMIYTGS). Residues 128 to 134 (KALQFLS) are Lumenal-facing. Residues 135 to 151 (IPVYTIFKNLTIILIAY) traverse the membrane as a helical segment. The Cytoplasmic portion of the chain corresponds to 152–160 (GEVLWFGGS). The helical transmembrane segment at 161 to 182 (VTGLTLFSFGLMVLSSIIAAWA) threads the bilayer. Residues 183-200 (DIKHAVESTGDATAKVST) are Lumenal-facing. Residues 201–221 (LNAGYIWMLVNCLCTSSYVLG) form a helical membrane-spanning segment. The Cytoplasmic segment spans residues 222–236 (MRKRIKLTNFKDFDT). Residues 237-257 (LAMFYNNLLSIPVLIVLTGLM) form a helical membrane-spanning segment. Topologically, residues 258 to 276 (EDWSSANITRNFPPADRNN) are lumenal. N-linked (GlcNAc...) asparagine glycosylation occurs at Asn-264. A helical membrane pass occupies residues 277–297 (IIFAMILSGLSSVFISYTSAW). At 298-305 (CVRVTSST) the chain is on the cytoplasmic side. A helical membrane pass occupies residues 306-326 (TYSMVGALNKLPIALSGLIFF). The Lumenal portion of the chain corresponds to 327 to 329 (DAP). Residues 330 to 350 (VTFPSVSAIVVGFVSGIVYAV) form a helical membrane-spanning segment. Topologically, residues 351–384 (AKIKQNAKPKTGVLPMSNPPVSASSQSMRDSLRS) are cytoplasmic. A disordered region spans residues 364–384 (LPMSNPPVSASSQSMRDSLRS). Residues 369–384 (PPVSASSQSMRDSLRS) show a composition bias toward polar residues.

The protein belongs to the TPT transporter family. SLC35D subfamily. Homooligomer.

The protein localises to the golgi apparatus membrane. Its subcellular location is the cytoplasmic vesicle membrane. It localises to the endoplasmic reticulum membrane. Involved in the import of GDP-mannose from the cytoplasm into the Golgi lumen. In Aspergillus terreus (strain NIH 2624 / FGSC A1156), this protein is GDP-mannose transporter (gmt1).